Here is a 577-residue protein sequence, read N- to C-terminus: Arginine--tRNA ligase (577 aa).

The short motif at 122-132 is the 'HIGH' region element; it reads PNVAKEMHVGH.

It belongs to the class-I aminoacyl-tRNA synthetase family. In terms of assembly, monomer.

It localises to the cytoplasm. The enzyme catalyses tRNA(Arg) + L-arginine + ATP = L-arginyl-tRNA(Arg) + AMP + diphosphate. The chain is Arginine--tRNA ligase from Escherichia coli O139:H28 (strain E24377A / ETEC).